The primary structure comprises 822 residues: Stemar-13-ene synthase (822 aa).

Residues 1-10 (MMLLSSSYSG) show a composition bias toward polar residues. The segment at 1–29 (MMLLSSSYSGGQFPGVSPLGTRPKRSTTV) is disordered. Positions 553, 557, 698, 702, and 706 each coordinate Mg(2+). Positions 553–557 (DDLFD) match the DDXXD motif motif.

This sequence belongs to the terpene synthase family. Requires Mg(2+) as cofactor.

It catalyses the reaction 9alpha-copalyl diphosphate = stemar-13-ene + diphosphate. Its function is as follows. Catalyzes the conversion of syn-copalyl diphosphate to the phytoalexin precursor stemarene. This chain is Stemar-13-ene synthase (KSL8), found in Oryza sativa subsp. japonica (Rice).